We begin with the raw amino-acid sequence, 104 residues long: Pyrimidine/purine nucleoside phosphorylase (104 aa).

Belongs to the nucleoside phosphorylase PpnP family.

It carries out the reaction a purine D-ribonucleoside + phosphate = a purine nucleobase + alpha-D-ribose 1-phosphate. The catalysed reaction is adenosine + phosphate = alpha-D-ribose 1-phosphate + adenine. The enzyme catalyses cytidine + phosphate = cytosine + alpha-D-ribose 1-phosphate. It catalyses the reaction guanosine + phosphate = alpha-D-ribose 1-phosphate + guanine. It carries out the reaction inosine + phosphate = alpha-D-ribose 1-phosphate + hypoxanthine. The catalysed reaction is thymidine + phosphate = 2-deoxy-alpha-D-ribose 1-phosphate + thymine. The enzyme catalyses uridine + phosphate = alpha-D-ribose 1-phosphate + uracil. It catalyses the reaction xanthosine + phosphate = alpha-D-ribose 1-phosphate + xanthine. Catalyzes the phosphorolysis of diverse nucleosides, yielding D-ribose 1-phosphate and the respective free bases. Can use uridine, adenosine, guanosine, cytidine, thymidine, inosine and xanthosine as substrates. Also catalyzes the reverse reactions. The protein is Pyrimidine/purine nucleoside phosphorylase of Thiobacillus denitrificans (strain ATCC 25259 / T1).